The chain runs to 217 residues: Peroxiredoxin Q, chloroplastic (217 aa).

The N-terminal 65 residues, 1–65 (MAAICLPVAK…PPPSYSARIS (65 aa)), are a transit peptide targeting the chloroplast. The region spanning 70-217 (VSKGSVPPQF…DETLKFLQSA (148 aa)) is the Thioredoxin domain. Cysteine 112 acts as the Cysteine sulfenic acid (-SOH) intermediate in catalysis. A disulfide bridge connects residues cysteine 112 and cysteine 117.

Belongs to the peroxiredoxin family. BCP/PrxQ subfamily. As to quaternary structure, monomer. Expressed in the leaves, roots and stems.

The protein resides in the plastid. Its subcellular location is the chloroplast thylakoid lumen. It carries out the reaction a hydroperoxide + [thioredoxin]-dithiol = an alcohol + [thioredoxin]-disulfide + H2O. Its function is as follows. Thiol-specific peroxidase that catalyzes the reduction of hydrogen peroxide and organic hydroperoxides to water and alcohols, respectively. Plays a role in cell protection against oxidative stress by detoxifying peroxides. Involved in both resistance against fungal disease and oxidative stress. In Gentiana triflora (Clustered gentian), this protein is Peroxiredoxin Q, chloroplastic (AFP1).